The sequence spans 598 residues: Leucine aminopeptidase 2, chloroplastic (598 aa).

The transit peptide at 1–71 (MATAASTSAA…GHRARMGHTA (71 aa)) directs the protein to the chloroplast. Positions 367 and 372 each coordinate Mn(2+). Residue K379 is part of the active site. Mn(2+)-binding residues include D392, D452, and E454. R456 is a catalytic residue.

This sequence belongs to the peptidase M17 family. Homohexamer (dimer of homotrimers). It depends on Mn(2+) as a cofactor.

Its subcellular location is the plastid. The protein localises to the chloroplast. It catalyses the reaction Release of an N-terminal amino acid, Xaa-|-Yaa-, in which Xaa is preferably Leu, but may be other amino acids including Pro although not Arg or Lys, and Yaa may be Pro. Amino acid amides and methyl esters are also readily hydrolyzed, but rates on arylamides are exceedingly low.. The catalysed reaction is Release of N-terminal proline from a peptide.. In terms of biological role, presumably involved in the processing and regular turnover of intracellular proteins. Catalyzes the removal of unsubstituted N-terminal amino acids from various peptides. The polypeptide is Leucine aminopeptidase 2, chloroplastic (Oryza sativa subsp. japonica (Rice)).